The primary structure comprises 345 residues: Anthranilate phosphoribosyltransferase (345 aa).

5-phospho-alpha-D-ribose 1-diphosphate is bound by residues glycine 87, glycine 90–aspartate 91, threonine 95, asparagine 97–threonine 100, lysine 115–serine 123, and serine 127. Glycine 87 is a binding site for anthranilate. Residue serine 99 coordinates Mg(2+). Asparagine 118 is a binding site for anthranilate. Position 173 (arginine 173) interacts with anthranilate. Aspartate 232 and glutamate 233 together coordinate Mg(2+).

This sequence belongs to the anthranilate phosphoribosyltransferase family. Homodimer. It depends on Mg(2+) as a cofactor.

The catalysed reaction is N-(5-phospho-beta-D-ribosyl)anthranilate + diphosphate = 5-phospho-alpha-D-ribose 1-diphosphate + anthranilate. Its pathway is amino-acid biosynthesis; L-tryptophan biosynthesis; L-tryptophan from chorismate: step 2/5. Functionally, catalyzes the transfer of the phosphoribosyl group of 5-phosphorylribose-1-pyrophosphate (PRPP) to anthranilate to yield N-(5'-phosphoribosyl)-anthranilate (PRA). The protein is Anthranilate phosphoribosyltransferase of Aeropyrum pernix (strain ATCC 700893 / DSM 11879 / JCM 9820 / NBRC 100138 / K1).